Here is a 563-residue protein sequence, read N- to C-terminus: Choline transporter (563 aa).

The segment at 1–25 (MSIRNDNASGGYMQPDQSSNASMHK) is disordered. Over 1–57 (MSIRNDNASGGYMQPDQSSNASMHKRDLRVEEEIKPLDDMDSKGAVAADGEVHLRKS) the chain is Extracellular. Residues Asn7 and Asn20 are each glycosylated (N-linked (GlcNAc...) asparagine). Residues Ser22 and Ser42 each carry the phosphoserine modification. The helical transmembrane segment at 58–78 (FSLWSILGVGFGLTNSWFGIS) threads the bilayer. Over 79–87 (TSMVAGISS) the chain is Cytoplasmic. The chain crosses the membrane as a helical span at residues 88 to 108 (GGPMMIVYGIIIVALISICIG). At 109-182 (TSLGELSSAY…LTHPEFIPKR (74 aa)) the chain is on the extracellular side. A helical membrane pass occupies residues 183–203 (WHIFVCFELLHLFLMFFNCYG). Residues 204 to 205 (KS) lie on the Cytoplasmic side of the membrane. The chain crosses the membrane as a helical span at residues 206 to 226 (LPIISSSSLYISLLSFFTITI). Residues 227–255 (TVLACSHGKFNDAKFVFATFNNETGWKNG) lie on the Extracellular side of the membrane. N-linked (GlcNAc...) asparagine glycosylation occurs at Asn248. The helical transmembrane segment at 256–276 (GIAFIVGLINPAWSFSCLDCA) threads the bilayer. Topologically, residues 277-293 (THMAFEVEKPERVIPIA) are cytoplasmic. The chain crosses the membrane as a helical span at residues 294–314 (IMGTVAIGFVTSFCYVIAMFF). The Extracellular segment spans residues 315–342 (SIQDLDAVLSSTTGAPILDIYNQALGNK). Asn341 carries N-linked (GlcNAc...) asparagine glycosylation. The chain crosses the membrane as a helical span at residues 343–363 (SGAIFLGCLILFTSFGCVIAC). At 364-398 (HTWQARLCWSFARDNGLPLSRLWSQVNPHTGVPLN) the chain is on the cytoplasmic side. The helical transmembrane segment at 399 to 417 (AHLMSCAWITLIGLLYLAS) threads the bilayer. Topologically, residues 418–426 (STAFQSLIT) are extracellular. The chain crosses the membrane as a helical span at residues 427–445 (GCIAFLLLSYIIPVICLLA). The Cytoplasmic segment spans residues 446-465 (KKRNIAHGPFWLGKFGFFSN). A helical membrane pass occupies residues 466–486 (IVLLGWTVFSVVFFSFPPVLP). Over 487 to 491 (VTKDN) the chain is Extracellular. A helical transmembrane segment spans residues 492–512 (MNYVCVVIVGYTAYSILYWKY). Topologically, residues 513 to 563 (KGKKEFHALEESENEQAEYSNNFDTIEDSREFSVAASDVELENEHVPWGKK) are cytoplasmic.

It belongs to the amino acid-polyamine-organocation (APC) superfamily. Amino acid/choline transporter (ACT) (TC 2.A.3.4) family.

The protein resides in the membrane. It catalyses the reaction choline(out) = choline(in). The enzyme catalyses ethanolamine(in) = ethanolamine(out). Functionally, sole choline transporter in yeast. Also transports ethanolamine. This chain is Choline transporter (HNM1), found in Saccharomyces cerevisiae (strain ATCC 204508 / S288c) (Baker's yeast).